We begin with the raw amino-acid sequence, 394 residues long: GTPase Obg (394 aa).

Residues 5 to 163 (SNFVDYVKIY…RMVIMQLKML (159 aa)) enclose the Obg domain. Residues 26 to 45 (HFRREKYIPKGGPDGGDGGR) are disordered. Positions 164–330 (ADVGLVGFPN…LKDTLWKELS (167 aa)) constitute an OBG-type G domain. GTP is bound by residues 170–177 (GFPNAGKS), 195–199 (FTTLE), 217–220 (DIPG), 284–287 (TKCD), and 311–313 (SAV). The Mg(2+) site is built by S177 and T197.

This sequence belongs to the TRAFAC class OBG-HflX-like GTPase superfamily. OBG GTPase family. Monomer. Requires Mg(2+) as cofactor.

It localises to the cytoplasm. In terms of biological role, an essential GTPase which binds GTP, GDP and possibly (p)ppGpp with moderate affinity, with high nucleotide exchange rates and a fairly low GTP hydrolysis rate. Plays a role in control of the cell cycle, stress response, ribosome biogenesis and in those bacteria that undergo differentiation, in morphogenesis control. The protein is GTPase Obg of Porphyromonas gingivalis (strain ATCC 33277 / DSM 20709 / CIP 103683 / JCM 12257 / NCTC 11834 / 2561).